Reading from the N-terminus, the 333-residue chain is Fructose-1,6-bisphosphatase class 1 1 (333 aa).

The Mg(2+) site is built by E81, D100, L102, and D103. Substrate is bound by residues 103-106 (DGSS) and N191. Residue E263 participates in Mg(2+) binding.

Belongs to the FBPase class 1 family. Homotetramer. Mg(2+) serves as cofactor.

The protein resides in the cytoplasm. It carries out the reaction beta-D-fructose 1,6-bisphosphate + H2O = beta-D-fructose 6-phosphate + phosphate. It functions in the pathway carbohydrate biosynthesis; Calvin cycle. In Cereibacter sphaeroides (strain ATCC 17023 / DSM 158 / JCM 6121 / CCUG 31486 / LMG 2827 / NBRC 12203 / NCIMB 8253 / ATH 2.4.1.) (Rhodobacter sphaeroides), this protein is Fructose-1,6-bisphosphatase class 1 1.